Consider the following 1193-residue polypeptide: DNA-directed RNA polymerase subunit beta (1193 aa).

Residues 1153–1162 (EMRDLEDDED) show a composition bias toward acidic residues. Residues 1153–1193 (EMRDLEDDEDAKQNEGLSLPNDEESEELVSADAERDVVTKE) form a disordered region. Residues 1184–1193 (DAERDVVTKE) show a composition bias toward basic and acidic residues.

Belongs to the RNA polymerase beta chain family. In terms of assembly, the RNAP catalytic core consists of 2 alpha, 1 beta, 1 beta' and 1 omega subunit. When a sigma factor is associated with the core the holoenzyme is formed, which can initiate transcription.

The catalysed reaction is RNA(n) + a ribonucleoside 5'-triphosphate = RNA(n+1) + diphosphate. Functionally, DNA-dependent RNA polymerase catalyzes the transcription of DNA into RNA using the four ribonucleoside triphosphates as substrates. The protein is DNA-directed RNA polymerase subunit beta of Bacillus licheniformis (strain ATCC 14580 / DSM 13 / JCM 2505 / CCUG 7422 / NBRC 12200 / NCIMB 9375 / NCTC 10341 / NRRL NRS-1264 / Gibson 46).